We begin with the raw amino-acid sequence, 205 residues long: Probable GTP-binding protein EngB (205 aa).

In terms of domain architecture, EngB-type G spans 29-203; that stretch reads QGAEIAFIGR…KAVLSQWFRS (175 aa). Residues 37–44, 64–68, 82–85, 149–152, and 182–184 contribute to the GTP site; these read GRSNAGKS, GRTQM, DLPG, TKSD, and FSS. Serine 44 and threonine 66 together coordinate Mg(2+).

This sequence belongs to the TRAFAC class TrmE-Era-EngA-EngB-Septin-like GTPase superfamily. EngB GTPase family. It depends on Mg(2+) as a cofactor.

Functionally, necessary for normal cell division and for the maintenance of normal septation. This Coxiella burnetii (strain RSA 331 / Henzerling II) protein is Probable GTP-binding protein EngB.